We begin with the raw amino-acid sequence, 265 residues long: O-methyltransferase NEC2 (265 aa).

It belongs to the methyltransferase superfamily.

The catalysed reaction is desmethylnectriapyrone + S-adenosyl-L-methionine = nectriapyrone + S-adenosyl-L-homocysteine + H(+). O-methyltransferase; part of the gene cluster that mediates the biosynthesis of nectriapyrone and its analogs phomopyrone A, acropyrone and zaepyrone. The nectriapyrone biosynthetic gene cluster consists of two genes, the highly reducing polyketide synthase NEC1 that produces a demethylated analog of nectriapyrone from one unit of acetyl-CoA and one unit of malonyl-CoA; and the O-methyltransferase NEC2 that further methylates the NEC1 product to yield nectriapyrone. Nectriapyrone is further hydrolyzed to nectriapyrone D, also known as gulypyrone B, by an unidentified hydrolase localized outside the nectriapyrone cluster. The polypeptide is O-methyltransferase NEC2 (Pyricularia oryzae (strain 70-15 / ATCC MYA-4617 / FGSC 8958) (Rice blast fungus)).